A 292-amino-acid polypeptide reads, in one-letter code: Mitochondrial fission regulator 1-like (292 aa).

At Thr-30 the chain carries Phosphothreonine. At Ser-41 the chain carries Phosphoserine. Ser-103 carries the post-translational modification Phosphoserine; by AMPK. Phosphoserine occurs at positions 110, 224, and 225. Ser-238 bears the Phosphoserine; by AMPK mark. Ser-261 and Ser-273 each carry phosphoserine.

This sequence belongs to the MTFR1 family. In terms of processing, phosphorylated by AMPK. Upon stress, phosphorylation at Ser-103 and Ser-238 by AMPK is sufficient to induce mitochondrial fragmentation.

Its subcellular location is the mitochondrion outer membrane. Its function is as follows. Mitochondrial protein required for adaptation of miochondrial dynamics to metabolic changes. Regulates mitochondrial morphology at steady state and mediates AMPK-dependent stress-induced mitochondrial fragmentation via the control of OPA1 levels. In Homo sapiens (Human), this protein is Mitochondrial fission regulator 1-like.